We begin with the raw amino-acid sequence, 490 residues long: Phosphoglucosamine mutase (490 aa).

Residue Ser-139 is the Phosphoserine intermediate of the active site. The Mg(2+) site is built by Ser-139, Asp-279, Asp-281, and Asp-283. Phosphoserine is present on Ser-139.

Belongs to the phosphohexose mutase family. The cofactor is Mg(2+). In terms of processing, activated by phosphorylation.

It catalyses the reaction alpha-D-glucosamine 1-phosphate = D-glucosamine 6-phosphate. Functionally, catalyzes the conversion of glucosamine-6-phosphate to glucosamine-1-phosphate. In Nostoc sp. (strain PCC 7120 / SAG 25.82 / UTEX 2576), this protein is Phosphoglucosamine mutase.